A 166-amino-acid polypeptide reads, in one-letter code: uncharacterized protein (166 aa).

Helical transmembrane passes span 7 to 27 (VLFK…SLFY), 30 to 50 (FLFA…YCYI), 69 to 89 (IETL…KSLL), and 92 to 112 (NSFF…LVLF).

This sequence to M.jannaschii MJ0795.1 and MJ0785.1.

It is found in the cell membrane. This is an uncharacterized protein from Methanocaldococcus jannaschii (strain ATCC 43067 / DSM 2661 / JAL-1 / JCM 10045 / NBRC 100440) (Methanococcus jannaschii).